A 254-amino-acid polypeptide reads, in one-letter code: 3-deoxy-manno-octulosonate cytidylyltransferase (254 aa).

The protein belongs to the KdsB family.

Its subcellular location is the cytoplasm. The catalysed reaction is 3-deoxy-alpha-D-manno-oct-2-ulosonate + CTP = CMP-3-deoxy-beta-D-manno-octulosonate + diphosphate. The protein operates within nucleotide-sugar biosynthesis; CMP-3-deoxy-D-manno-octulosonate biosynthesis; CMP-3-deoxy-D-manno-octulosonate from 3-deoxy-D-manno-octulosonate and CTP: step 1/1. It functions in the pathway bacterial outer membrane biogenesis; lipopolysaccharide biosynthesis. Functionally, activates KDO (a required 8-carbon sugar) for incorporation into bacterial lipopolysaccharide in Gram-negative bacteria. The chain is 3-deoxy-manno-octulosonate cytidylyltransferase from Bordetella pertussis (strain Tohama I / ATCC BAA-589 / NCTC 13251).